A 288-amino-acid polypeptide reads, in one-letter code: ATP synthase gamma chain (288 aa).

This sequence belongs to the ATPase gamma chain family. In terms of assembly, F-type ATPases have 2 components, CF(1) - the catalytic core - and CF(0) - the membrane proton channel. CF(1) has five subunits: alpha(3), beta(3), gamma(1), delta(1), epsilon(1). CF(0) has three main subunits: a, b and c.

It localises to the cell inner membrane. In terms of biological role, produces ATP from ADP in the presence of a proton gradient across the membrane. The gamma chain is believed to be important in regulating ATPase activity and the flow of protons through the CF(0) complex. The chain is ATP synthase gamma chain from Rickettsia bellii (strain RML369-C).